The chain runs to 200 residues: V-type proton ATPase subunit E (200 aa).

The protein belongs to the V-ATPase E subunit family.

In terms of biological role, produces ATP from ADP in the presence of a proton gradient across the membrane. The protein is V-type proton ATPase subunit E of Thermoanaerobacter pseudethanolicus (strain ATCC 33223 / 39E) (Clostridium thermohydrosulfuricum).